Reading from the N-terminus, the 387-residue chain is 3-ketoacyl-CoA thiolase (387 aa).

Catalysis depends on cysteine 91, which acts as the Acyl-thioester intermediate. Residues histidine 343 and cysteine 373 each act as proton acceptor in the active site.

The protein belongs to the thiolase-like superfamily. Thiolase family. Heterotetramer of two alpha chains (FadB) and two beta chains (FadA).

It localises to the cytoplasm. It catalyses the reaction an acyl-CoA + acetyl-CoA = a 3-oxoacyl-CoA + CoA. The protein operates within lipid metabolism; fatty acid beta-oxidation. Catalyzes the final step of fatty acid oxidation in which acetyl-CoA is released and the CoA ester of a fatty acid two carbons shorter is formed. The protein is 3-ketoacyl-CoA thiolase of Shewanella baltica (strain OS185).